Reading from the N-terminus, the 355-residue chain is C-C chemokine receptor type 8 (355 aa).

The Extracellular portion of the chain corresponds to 1–35; sequence MDYTLDLSVTTVTDYYYPDIFSSPCDAELIQTNGK. A helical transmembrane segment spans residues 36-63; sequence LLLAVFYCLLFVFSLLGNSLVILVLVVC. Topologically, residues 64–73 are cytoplasmic; it reads KKLRSITDVY. The helical transmembrane segment at 74–93 threads the bilayer; that stretch reads LLNLALSDLLFVFSFPFQTY. The Extracellular segment spans residues 94–107; that stretch reads YLLDQWVFGTVMCK. A disulfide bridge links C106 with C183. The chain crosses the membrane as a helical span at residues 108 to 129; it reads VVSGFYYIGFYSSMFFITLMSV. Over 130 to 146 the chain is Cytoplasmic; that stretch reads DRYLAVVHAVYALKVRT. Residues 147-171 traverse the membrane as a helical segment; the sequence is IRMGTTLCLAVWLTAIMATIPLLVF. Residues 172–202 lie on the Extracellular side of the membrane; it reads YQVASEDGVLQCYSFYNQQTLKWKIFTNFKM. A helical transmembrane segment spans residues 203–222; sequence NILGLLIPFTIFMFCYIKIL. At 223 to 238 the chain is on the cytoplasmic side; it reads HQLKRCQNHNKTKAIR. The helical transmembrane segment at 239–263 threads the bilayer; it reads LVLIVVIASLLFWVPFNVVLFLTSL. Residues 264–280 lie on the Extracellular side of the membrane; the sequence is HSMHILDGCSISQQLTY. The chain crosses the membrane as a helical span at residues 281–304; that stretch reads ATHVTEIISFTHCCVNPVIYAFVG. Residues 305 to 355 are Cytoplasmic-facing; it reads EKFKKHLSEIFQKSCSQIFNYLGRQMPRESCEKSSSCQQHSSRSSSVDYIL.

This sequence belongs to the G-protein coupled receptor 1 family.

The protein localises to the cell membrane. Its function is as follows. Receptor for the chemokine CCL1/SCYA1/I-309. May regulate monocyte chemotaxis and thymic cell line apoptosis. Alternative coreceptor with CD4 for HIV-1 infection. The chain is C-C chemokine receptor type 8 (CCR8) from Homo sapiens (Human).